Here is a 271-residue protein sequence, read N- to C-terminus: Putative cysteine protease YopT-like blr2140 (271 aa).

A disordered region spans residues 1–81 (MYDRIGGSST…STSSPESPAT (81 aa)). Positions 7-29 (GSSTRTSQTDEPSQSVDSGSFTE) are enriched in polar residues. Residues 65-81 (TSSASEPSTSSPESPAT) show a composition bias toward low complexity. C100 is an active-site residue. Residues 114–136 (SPSTRMSALTPGSQTHASAAERQ) form a disordered region. Active-site residues include H213 and D228.

It belongs to the peptidase C58 family.

In terms of biological role, potential cysteine protease, which may play a central role after invasion of host cell. The protein is Putative cysteine protease YopT-like blr2140 of Bradyrhizobium diazoefficiens (strain JCM 10833 / BCRC 13528 / IAM 13628 / NBRC 14792 / USDA 110).